Here is an 87-residue protein sequence, read N- to C-terminus: Small ribosomal subunit protein bS21 (87 aa).

Residues 35–52 (HYEKPSEKKAREKAEAVR) show a composition bias toward basic and acidic residues. Residues 35-87 (HYEKPSEKKAREKAEAVRRARKLARKKLQREGLLPSKPKPAFGADRRPSAAAR) form a disordered region. Basic residues predominate over residues 53–62 (RARKLARKKL). Residues 78 to 87 (ADRRPSAAAR) show a composition bias toward basic and acidic residues.

This Rhodopseudomonas palustris (strain ATCC BAA-98 / CGA009) protein is Small ribosomal subunit protein bS21.